We begin with the raw amino-acid sequence, 212 residues long: Large ribosomal subunit protein uL4 (212 aa).

Residues 54–65 (SQKSRSDVSGSN) show a composition bias toward polar residues. Residues 54–85 (SQKSRSDVSGSNKKPWRQKGTGRARSGSVKSP) form a disordered region.

This sequence belongs to the universal ribosomal protein uL4 family. As to quaternary structure, part of the 50S ribosomal subunit.

Its function is as follows. One of the primary rRNA binding proteins, this protein initially binds near the 5'-end of the 23S rRNA. It is important during the early stages of 50S assembly. It makes multiple contacts with different domains of the 23S rRNA in the assembled 50S subunit and ribosome. In terms of biological role, forms part of the polypeptide exit tunnel. The polypeptide is Large ribosomal subunit protein uL4 (Blochmanniella floridana).